Consider the following 854-residue polypeptide: Fibronectin-binding protein PlpA (854 aa).

The span at 1 to 24 (MDNNQNNFNQPGQQGFDQYQQQSG) shows a compositional bias: low complexity. The interval 1–33 (MDNNQNNFNQPGQQGFDQYQQQSGALVSYGYDA) is disordered. The tract at residues 91-109 (QYNQQQNQGYEQQYDEYGN) is fibronectin-binding. 4 disordered regions span residues 247–327 (YEQE…LEAP), 411–434 (SSNNELKTTNQQLKTSNEALEDSN), 743–766 (TINPPQPQPQALPQPHPQPQQLPP), and 835–854 (IQPSFRRRGGRAKFDPYNNR). Basic and acidic residues predominate over residues 258–267 (EPAHEQDLRE). Polar residues-rich tracts occupy residues 311–320 (TVNQPDQTPI) and 411–428 (SSNNELKTTNQQLKTSNE). A coiled-coil region spans residues 384 to 622 (NLEEIQKVKL…SSFQKALSEV (239 aa)). Over residues 746–764 (PPQPQPQALPQPHPQPQQL) the composition is skewed to pro residues.

Its subcellular location is the cell membrane. Functionally, binds immobilized fibronectin, specifically the gelatin/heparin-binding domain. This Mycoplasmoides gallisepticum (strain R(low / passage 15 / clone 2)) (Mycoplasma gallisepticum) protein is Fibronectin-binding protein PlpA (plpA).